A 104-amino-acid chain; its full sequence is Replication restart protein PriB (104 aa).

In terms of domain architecture, SSB spans 1–101; it reads MTNRLVLSGT…LHAEQIELID (101 aa).

This sequence belongs to the PriB family. In terms of assembly, homodimer. Interacts with PriA and DnaT. Component of the replication restart primosome. Primosome assembly occurs via a 'hand-off' mechanism. PriA binds to replication forks, subsequently PriB then DnaT bind; DnaT then displaces ssDNA to generate the helicase loading substrate.

Functionally, involved in the restart of stalled replication forks, which reloads the replicative helicase on sites other than the origin of replication; the PriA-PriB pathway is the major replication restart pathway. During primosome assembly it facilitates complex formation between PriA and DnaT on DNA; stabilizes PriA on DNA. Stimulates the DNA unwinding activity of PriA helicase. The protein is Replication restart protein PriB of Shigella dysenteriae serotype 1 (strain Sd197).